The following is a 741-amino-acid chain: Chromosome transmission fidelity protein 18 (741 aa).

183 to 190 (GPPGIGKT) contacts ATP.

It belongs to the activator 1 small subunits family. CTF18 subfamily. In terms of assembly, component of the CTF18-RFC complex, which consists of CTF18, CTF8, DCC1, RFC2, RFC3, RFC4 and RFC5. CTF18 interacts with ECO1.

It localises to the nucleus. Functionally, essential for the fidelity of chromosome transmission. Required for the DNA replication block checkpoint. Component of the RFC-like complex CTF18-RFC which is required for efficient establishment of chromosome cohesion during S-phase and may load or unload POL30/PCNA. During a clamp loading circle, the RFC:clamp complex binds to DNA and the recognition of the double-stranded/single-stranded junction stimulates ATP hydrolysis by RFC. The complex presumably provides bipartite ATP sites in which one subunit supplies a catalytic site for hydrolysis of ATP bound to the neighboring subunit. Dissociation of RFC from the clamp leaves the clamp encircling DNA. This Saccharomyces cerevisiae (strain ATCC 204508 / S288c) (Baker's yeast) protein is Chromosome transmission fidelity protein 18 (CTF18).